Consider the following 149-residue polypeptide: SsrA-binding protein (149 aa).

The protein belongs to the SmpB family.

The protein localises to the cytoplasm. In terms of biological role, required for rescue of stalled ribosomes mediated by trans-translation. Binds to transfer-messenger RNA (tmRNA), required for stable association of tmRNA with ribosomes. tmRNA and SmpB together mimic tRNA shape, replacing the anticodon stem-loop with SmpB. tmRNA is encoded by the ssrA gene; the 2 termini fold to resemble tRNA(Ala) and it encodes a 'tag peptide', a short internal open reading frame. During trans-translation Ala-aminoacylated tmRNA acts like a tRNA, entering the A-site of stalled ribosomes, displacing the stalled mRNA. The ribosome then switches to translate the ORF on the tmRNA; the nascent peptide is terminated with the 'tag peptide' encoded by the tmRNA and targeted for degradation. The ribosome is freed to recommence translation, which seems to be the essential function of trans-translation. The chain is SsrA-binding protein from Wolbachia pipientis wMel.